The chain runs to 315 residues: Acetyl-coenzyme A carboxylase carboxyl transferase subunit alpha (315 aa).

In terms of domain architecture, CoA carboxyltransferase C-terminal spans 40–293 (LQDKSKTLTE…REELSSQLAM (254 aa)).

This sequence belongs to the AccA family. Acetyl-CoA carboxylase is a heterohexamer composed of biotin carboxyl carrier protein (AccB), biotin carboxylase (AccC) and two subunits each of ACCase subunit alpha (AccA) and ACCase subunit beta (AccD).

The protein localises to the cytoplasm. The enzyme catalyses N(6)-carboxybiotinyl-L-lysyl-[protein] + acetyl-CoA = N(6)-biotinyl-L-lysyl-[protein] + malonyl-CoA. The protein operates within lipid metabolism; malonyl-CoA biosynthesis; malonyl-CoA from acetyl-CoA: step 1/1. Functionally, component of the acetyl coenzyme A carboxylase (ACC) complex. First, biotin carboxylase catalyzes the carboxylation of biotin on its carrier protein (BCCP) and then the CO(2) group is transferred by the carboxyltransferase to acetyl-CoA to form malonyl-CoA. This chain is Acetyl-coenzyme A carboxylase carboxyl transferase subunit alpha, found in Pseudomonas syringae pv. tomato (strain ATCC BAA-871 / DC3000).